A 376-amino-acid chain; its full sequence is Serine-arginine protein 55 (376 aa).

Residues 4-74 (SRVYVGGLPY…ERVVVEPARG (71 aa)) enclose the RRM 1 domain. The tract at residues 73 to 114 (RGTARGSNRDRYDDRYGGRRGGGGGRYNEKNKNSRSSSRYGP) is disordered. Residues 79–89 (SNRDRYDDRYG) show a composition bias toward basic and acidic residues. In terms of domain architecture, RRM 2 spans 120–193 (YRLIVENLSS…RRIHLVEDRR (74 aa)). Residue serine 165 is modified to Phosphoserine. Basic and acidic residues predominate over residues 185–194 (RIHLVEDRRG). The tract at residues 185-376 (RIHLVEDRRG…PDRNNESMDD (192 aa)) is disordered. The segment covering 196–205 (RSGGGGGSGR) has biased composition (gly residues). Composition is skewed to basic residues over residues 215-263 (SRSR…SRSN) and 271-283 (SKSK…RSRS). Residues 284–304 (PKRERDSRSRSRSVSKRESRS) show a composition bias toward basic and acidic residues.

Belongs to the splicing factor SR family. In terms of processing, extensively phosphorylated on serine residues in the RS domain.

Its subcellular location is the nucleus. Functionally, essential for development. May have a critical role in splicing or in controlling alternative splice site use of at least some pre-mRNA in vivo. Not required for all splicing. May play a general role in the condensation or decondensation of chromatin. This chain is Serine-arginine protein 55 (B52), found in Drosophila melanogaster (Fruit fly).